A 311-amino-acid chain; its full sequence is Phosphopantothenate--cysteine ligase (311 aa).

Position 2 is an N-acetylalanine (A2).

It belongs to the PPC synthetase family. As to quaternary structure, homodimer.

The catalysed reaction is (R)-4'-phosphopantothenate + L-cysteine + ATP = N-[(R)-4-phosphopantothenoyl]-L-cysteine + AMP + diphosphate + H(+). It carries out the reaction (R)-4'-phosphopantothenate + L-cysteine + CTP = N-[(R)-4-phosphopantothenoyl]-L-cysteine + CMP + diphosphate + H(+). It functions in the pathway cofactor biosynthesis; coenzyme A biosynthesis; CoA from (R)-pantothenate: step 2/5. Catalyzes the second step in the biosynthesis of coenzyme A from vitamin B5, where cysteine is conjugated to 4'-phosphopantothenate to form 4-phosphopantothenoylcysteine. Has a preference for ATP over CTP as a cosubstrate. In Homo sapiens (Human), this protein is Phosphopantothenate--cysteine ligase (PPCS).